The following is a 270-amino-acid chain: Putative phosphoenolpyruvate synthase regulatory protein (270 aa).

150-157 (GVSRCGKT) is an ADP binding site.

Belongs to the pyruvate, phosphate/water dikinase regulatory protein family. PSRP subfamily.

It carries out the reaction [pyruvate, water dikinase] + ADP = [pyruvate, water dikinase]-phosphate + AMP + H(+). It catalyses the reaction [pyruvate, water dikinase]-phosphate + phosphate + H(+) = [pyruvate, water dikinase] + diphosphate. Its function is as follows. Bifunctional serine/threonine kinase and phosphorylase involved in the regulation of the phosphoenolpyruvate synthase (PEPS) by catalyzing its phosphorylation/dephosphorylation. This chain is Putative phosphoenolpyruvate synthase regulatory protein, found in Shewanella amazonensis (strain ATCC BAA-1098 / SB2B).